The chain runs to 956 residues: Pyruvate, phosphate dikinase, chloroplastic (956 aa).

A chloroplast-targeting transit peptide spans 1–79 (MMSSLFVEGM…AVLNPVSPPV (79 aa)). A Phosphothreonine; by PDRP1 modification is found at Thr-536. The Tele-phosphohistidine intermediate role is filled by His-538. 7 residues coordinate substrate: Arg-644, Arg-701, Glu-830, Gly-851, Thr-852, Asn-853, and Asp-854. Residue Glu-830 coordinates Mg(2+). Position 854 (Asp-854) interacts with Mg(2+). Cys-916 (proton donor) is an active-site residue.

This sequence belongs to the PEP-utilizing enzyme family. Homotetramer. Mg(2+) serves as cofactor. In terms of processing, phosphorylation of Thr-536 in the dark inactivates the enzyme. Dephosphorylation upon light stimulation reactivates the enzyme.

It localises to the plastid. It is found in the chloroplast. It catalyses the reaction pyruvate + phosphate + ATP = phosphoenolpyruvate + AMP + diphosphate + H(+). Activated by light-induced dephosphorylation. Inhibited by dark-induced phosphorylation. Both reactions are catalyzed by PDRP1. Functionally, formation of phosphoenolpyruvate. In Flaveria pringlei, this protein is Pyruvate, phosphate dikinase, chloroplastic (PPDK).